The primary structure comprises 248 residues: Putative TrmH family tRNA/rRNA methyltransferase (248 aa).

Residues Gly-196, Ile-216, and Leu-225 each contribute to the S-adenosyl-L-methionine site.

The protein belongs to the class IV-like SAM-binding methyltransferase superfamily. RNA methyltransferase TrmH family.

In Staphylococcus aureus (strain Mu50 / ATCC 700699), this protein is Putative TrmH family tRNA/rRNA methyltransferase.